The following is a 177-amino-acid chain: MSTMTTIARPYAKAAFDFAVEKNELNQWVQMLTFCSEVTKNKDMAQLLDGAVAPEKLAEIFISICGEQLNEFGQNLIHIMAENGRLKVLPDVLDQYILLQHEFEKVIDAEIISAIELTEQQKADIGAKLEARLERKVKLNCSVDEALLAGVIIRAGDLVIDNSVRGRLSRLSETLQS.

The protein belongs to the ATPase delta chain family. F-type ATPases have 2 components, F(1) - the catalytic core - and F(0) - the membrane proton channel. F(1) has five subunits: alpha(3), beta(3), gamma(1), delta(1), epsilon(1). F(0) has three main subunits: a(1), b(2) and c(10-14). The alpha and beta chains form an alternating ring which encloses part of the gamma chain. F(1) is attached to F(0) by a central stalk formed by the gamma and epsilon chains, while a peripheral stalk is formed by the delta and b chains.

It is found in the cell inner membrane. F(1)F(0) ATP synthase produces ATP from ADP in the presence of a proton or sodium gradient. F-type ATPases consist of two structural domains, F(1) containing the extramembraneous catalytic core and F(0) containing the membrane proton channel, linked together by a central stalk and a peripheral stalk. During catalysis, ATP synthesis in the catalytic domain of F(1) is coupled via a rotary mechanism of the central stalk subunits to proton translocation. In terms of biological role, this protein is part of the stalk that links CF(0) to CF(1). It either transmits conformational changes from CF(0) to CF(1) or is implicated in proton conduction. This Aliivibrio salmonicida (strain LFI1238) (Vibrio salmonicida (strain LFI1238)) protein is ATP synthase subunit delta.